Here is a 790-residue protein sequence, read N- to C-terminus: F-box and leucine-rich repeat protein 13 (790 aa).

One can recognise an F-box domain in the interval 237-283; sequence AFDISVLPEQAILQIFLYLTFKDMMACSRVNRSWMAMIQRGSLWNSI. LRR repeat units lie at residues 503–525, 531–552, 557–579, 582–602, 606–628, and 632–657; these read QLTV…HFFD, RLRE…IRLS, NLHY…YIAS, SLIS…TILS, KLRE…AYCK, and LLEH…IFCT.

Belongs to the DRC6 family. In terms of assembly, component of the nexin-dynein regulatory complex (N-DRC). Directly interacts with SKP1 and CUL1. Interacts with TCTE1/DRC5.

It localises to the cytoplasm. It is found in the cytoskeleton. The protein localises to the flagellum axoneme. Its subcellular location is the microtubule organizing center. The protein resides in the centrosome. In terms of biological role, substrate-recognition component of the SCF (SKP1-CUL1-F-box protein)-type E3 ubiquitin ligase complex. Component of the nexin-dynein regulatory complex (N-DRC), a key regulator of ciliary/flagellar motility which maintains the alignment and integrity of the distal axoneme and regulates microtubule sliding in motile axonemes. Specifically targets CEP192 isoform 3 for ubiquitin-mediated proteolysis and thereby acts as a regulator of microtubule nucleation activity. The protein is F-box and leucine-rich repeat protein 13 (Fbxl13) of Mus musculus (Mouse).